The chain runs to 456 residues: Pantothenate kinase 2, mitochondrial (456 aa).

A disordered region spans residues 16 to 89; it reads AGRFGAPMER…TSAGRPRAEG (74 aa). Composition is skewed to low complexity over residues 28–39 and 55–65; these read RAAATSAAVGES and SSAAPSGSGEA. A phosphoserine mark is found at serine 55, serine 56, and serine 75. Positions 154-161 match the Nuclear export signal motif; it reads LELKDLTL. Catalysis depends on glutamate 224, which acts as the Proton acceptor. Acetyl-CoA is bound by residues serine 278, serine 281, and arginine 293.

Belongs to the type II pantothenate kinase family. In terms of assembly, homodimer.

The protein localises to the cytoplasm. It localises to the cytosol. It carries out the reaction (R)-pantothenate + ATP = (R)-4'-phosphopantothenate + ADP + H(+). It participates in cofactor biosynthesis; coenzyme A biosynthesis; CoA from (R)-pantothenate: step 1/5. With respect to regulation, inhibited by acetyl-CoA. Inhibited by calcium hopantenate. Activated by palmitoylcarnitine. In terms of biological role, catalyzes the phosphorylation of pantothenate to generate 4'-phosphopantothenate in the first and rate-determining step of coenzyme A (CoA) synthesis. This is Pantothenate kinase 2, mitochondrial (Pank2) from Mus musculus (Mouse).